The chain runs to 547 residues: CAP-Gly domain-containing linker protein 3 (547 aa).

The tract at residues 1 to 49 (MTKTDPAPMAPPPRGEEEEEEEEDEPVPEAPSPTQERRQKPVVHPSAPA) is disordered. Positions 16–27 (EEEEEEEEDEPV) are enriched in acidic residues. ANK repeat units follow at residues 117-158 (TDMT…LRSR), 160-191 (TNMN…VVNS), and 197-229 (NHGS…LRNR). In terms of domain architecture, CAP-Gly 1 spans 314 to 356 (GTTEFASGQWVGVELDEPEGKNDGSVGGVRYFICPPKQGLFAS). The tract at residues 365–413 (DAPPSSVTSTPRTPRMDFSRVTGKGRREHKGKKKTPSSPSLGSLQQRDG) is disordered. Residues 367-377 (PPSSVTSTPRT) are compositionally biased toward low complexity. Threonine 374 bears the Phosphothreonine mark. Residues 387–399 (GKGRREHKGKKKT) are compositionally biased toward basic residues. Polar residues predominate over residues 400-410 (PSSPSLGSLQQ). A Phosphoserine modification is found at serine 401. A CAP-Gly 2 domain is found at 436-478 (GKTDFAPGYWYGIELDQPTGKHDGSVFGVRYFTCPPRHGVFAP). Residues 488 to 547 (STDSPGDSVGAKKVHQVTMTQPKRTFTTVRTPKDIASENSISRLLFCCWFPWMLRAEMQS) form a goLD region. 2 S-palmitoyl cysteine lipidation sites follow: cysteine 534 and cysteine 535.

Homodimer. Interacts with AKT1 and AKT2; when AKT1 and AKT2 are phosphorylated and activated, affinity is higher for AKT2. Interacts with ZDHHC13 (via ANK repeats). Interacts with ZDHHC17 (via ANK repeats). Palmitoylation by ZDHHC17 regulates association with the plasma membrane.

It is found in the cell membrane. The protein resides in the cytoplasm. Its subcellular location is the golgi apparatus. The protein localises to the golgi stack. Functionally, functions as a cytoplasmic linker protein. Involved in TGN-endosome dynamics. May modulate the cellular compartmentalization of AKT kinase family and promote its cell membrane localization, thereby playing a role in glucose transport in adipocytes. The sequence is that of CAP-Gly domain-containing linker protein 3 (CLIP3) from Homo sapiens (Human).